The primary structure comprises 296 residues: Short-chain dehydrogenase/reductase ascJ (296 aa).

NADP(+)-binding residues include Ile-28, Asp-66, and Asn-93. Ser-155 serves as the catalytic Proton donor. NADP(+)-binding residues include Tyr-168, Lys-172, and Thr-205. Tyr-168 serves as the catalytic Proton acceptor. The active-site Lowers pKa of active site Tyr is Lys-172.

Belongs to the short-chain dehydrogenases/reductases (SDR) family.

It carries out the reaction ascofuranol + A = ascofuranone + AH2. Its pathway is secondary metabolite biosynthesis; terpenoid biosynthesis. In terms of biological role, short-chain dehydrogenase/reductase; part of the asc-2 gene cluster that mediates the biosynthesis of ascofuranone, a strong inhibitor of cyanide-insensitive alternative oxidases and a promising drug candidate against African trypanosomiasis. The first step in the pathway is performed by the non-reducing polyketide synthase ascC that produces orsellinic acid by condensing acetyl-CoA with 3 malonyl-CoA units. Orsellinic acid is then prenylated by the prenyltransferase ascA to yield ilicicolinic acid B. Ilicicolinic acid B is further reduced to ilicicolin B by the reductase ascB. The halogenase ascD then chlorinates ilicicolin B to produce ilicicolin A which is converted to ilicicolin A epoxide by the cytochrome P450 monooxygenase ascE that catalyzes stereoselective epoxidation of the terminal double bond of the prenyl group. Ilicicolin A epoxide is the last common precursor for the biosynthesis of ascofuranone and ascochlorin. The terpene cyclase ascF produces a monocyclic terpene, and the cyclization reaction is proposed to be initiated by protonation of the terminal epoxide of ilicicolin A epoxide to generate a monocyclic tertiarycation, which is followed by a series of hydride and methyl shifts with abstraction of proton, leading to the formation of the (14S,15R,19R)-trimethylcyclohexanone ring structure of ilicicolin C, which is finally reduced to ascochlorin by the dehydrogenase ascG. On the other hand, ilicicolin A epoxide is hydroxylated by the cytochrome P450 monooxygenase ascH, and the resultant product is cyclized by the terpene cyclase ascI to ascofuranol via protonation-initiated epoxide ring opening, which facilitates the 6-endo-tet cyclization to form the tetrahy-drofuran ring. Finally, ascofuranol is oxidized into ascofuranone by ascJ. The polypeptide is Short-chain dehydrogenase/reductase ascJ (Acremonium egyptiacum (Oospora egyptiaca)).